The chain runs to 156 residues: Arginine repressor (156 aa).

The protein belongs to the ArgR family.

Its subcellular location is the cytoplasm. It functions in the pathway amino-acid biosynthesis; L-arginine biosynthesis [regulation]. Functionally, regulates arginine biosynthesis genes. This chain is Arginine repressor, found in Shewanella sediminis (strain HAW-EB3).